A 726-amino-acid polypeptide reads, in one-letter code: PTS system glucose-specific EIICBA component (726 aa).

In terms of domain architecture, PTS EIIC type-1 spans 1–453; the sequence is MMKDTFKNVL…FNYATPGRNG (453 aa). The next 9 membrane-spanning stretches (helical) occupy residues 18–38, 62–82, 90–110, 139–159, 184–204, 311–331, 344–364, 365–385, and 419–439; these read FGKA…MISI, IGWG…GGSW, AFAA…IFGV, VLEA…GFVG, FVPF…AAFW, FKVG…VAIY, GMMI…PIEY, MFMF…GAAF, and IVNF…IANF. The PTS EIIB type-1 domain occupies 473–555; sequence GSQAVNIINL…QDILDSGEII (83 aa). Cysteine 495 (phosphocysteine intermediate; for EIIB activity) is an active-site residue. Positions 596–700 constitute a PTS EIIA type-1 domain; it reads DPVFAQKMMG…ETSTVVVFTN (105 aa). Residue histidine 648 is the Tele-phosphohistidine intermediate; for EIIA activity of the active site.

The protein resides in the cell membrane. The catalysed reaction is N(pros)-phospho-L-histidyl-[protein] + D-glucose(out) = D-glucose 6-phosphate(in) + L-histidyl-[protein]. In terms of biological role, the phosphoenolpyruvate-dependent sugar phosphotransferase system (sugar PTS), a major carbohydrate active transport system, catalyzes the phosphorylation of incoming sugar substrates concomitantly with their translocation across the cell membrane. This system is involved in glucose transport. This is PTS system glucose-specific EIICBA component (exp5) from Streptococcus pneumoniae serotype 4 (strain ATCC BAA-334 / TIGR4).